A 245-amino-acid polypeptide reads, in one-letter code: MKVNAKSDHKLLPKVTKVVAKGDAKGKKVNKAWLHDHINDPYVKQARKEGYRARAAFKLKEMDETLGLIKPGDCVVDLGSTPGAWSQYVRRKLSPTGAAVGALNGRIIGLDLLPMEPIEGVVFIQGDFREPEVLAKLEQALSTEKGPVKVDLVISDMAPNLSGIESADAARIAHLVELAVEFAQTRMKPDGALVVKLFHGSGYDDLVKLFQASFKVVKRMKPKASRPNSSETFLVGRGLKNVTPV.

S-adenosyl-L-methionine is bound by residues glycine 83, tryptophan 85, aspartate 111, aspartate 127, and aspartate 156. Lysine 196 (proton acceptor) is an active-site residue.

It belongs to the class I-like SAM-binding methyltransferase superfamily. RNA methyltransferase RlmE family.

It localises to the cytoplasm. It carries out the reaction uridine(2552) in 23S rRNA + S-adenosyl-L-methionine = 2'-O-methyluridine(2552) in 23S rRNA + S-adenosyl-L-homocysteine + H(+). In terms of biological role, specifically methylates the uridine in position 2552 of 23S rRNA at the 2'-O position of the ribose in the fully assembled 50S ribosomal subunit. This Polaromonas naphthalenivorans (strain CJ2) protein is Ribosomal RNA large subunit methyltransferase E.